The sequence spans 1025 residues: Beta-galactosidase (1025 aa).

Residues Asn-105 and Asp-204 each coordinate substrate. Residue Asp-204 coordinates Na(+). Mg(2+) contacts are provided by Glu-417, His-419, and Glu-462. Residues Glu-462 and 538–541 contribute to the substrate site; that span reads EYAH. Glu-462 serves as the catalytic Proton donor. Glu-538 serves as the catalytic Nucleophile. Asn-598 lines the Mg(2+) pocket. Na(+) contacts are provided by Phe-602 and Asn-605. Asn-605 and Trp-1003 together coordinate substrate.

It belongs to the glycosyl hydrolase 2 family. In terms of assembly, homotetramer. Mg(2+) serves as cofactor. It depends on Na(+) as a cofactor.

The catalysed reaction is Hydrolysis of terminal non-reducing beta-D-galactose residues in beta-D-galactosides.. This chain is Beta-galactosidase, found in Aeromonas hydrophila subsp. hydrophila (strain ATCC 7966 / DSM 30187 / BCRC 13018 / CCUG 14551 / JCM 1027 / KCTC 2358 / NCIMB 9240 / NCTC 8049).